The sequence spans 239 residues: RNA polymerase sigma factor FliA (239 aa).

Residues L16 to W88 form a sigma-70 factor domain-2 region. The short motif at D43–Q46 is the Interaction with polymerase core subunit RpoC element. Residues N96–R166 are sigma-70 factor domain-3. Residues A185–R233 form a sigma-70 factor domain-4 region. A DNA-binding region (H-T-H motif) is located at residues L207–S226.

The protein belongs to the sigma-70 factor family. FliA subfamily.

The protein resides in the cytoplasm. Functionally, sigma factors are initiation factors that promote the attachment of RNA polymerase to specific initiation sites and are then released. This sigma factor controls the expression of flagella-related genes. The chain is RNA polymerase sigma factor FliA from Escherichia coli O157:H7.